A 407-amino-acid chain; its full sequence is Cytochrome P450 NovI (407 aa).

C357 is a heme binding site.

This sequence belongs to the cytochrome P450 family. It depends on heme as a cofactor.

It participates in antibiotic biosynthesis; novobiocin biosynthesis. Its function is as follows. Together with NovH, involved in the formation of a beta-OH-Tyr intermediate in the novobiocin biosynthesis pathway, an aminocoumarin family antibiotic that targets bacterial DNA gyrases. Acts as a cytochrome P450-type monooxygenase with specificity for the tyrosyl-S-NovH acyl enzyme (L-Tyr-S-NovH) to form the beta-OH-Tyr intermediate (L-beta-OH-Tyr-S-NovH). The chain is Cytochrome P450 NovI (novI) from Streptomyces niveus (Streptomyces spheroides).